The primary structure comprises 917 residues: Hexokinase-1 (917 aa).

The residue at position 1 (Met-1) is an N-acetylmethionine. The segment at 1–10 (MIAAQLLAYY) is mitochondrial-binding peptide (MBP). Hexokinase domains follow at residues 16–458 (DDQV…MVTA) and 464–906 (AEQH…LITA). Residues Arg-30 and 84-89 (DLGGSS) each bind ATP. The interval 73 to 207 (DGSEKGDFIA…DYDANIVAVV (135 aa)) is hexokinase small subdomain 1. 84-91 (DLGGSSFR) provides a ligand contact to D-glucose 6-phosphate. D-glucose contacts are provided by residues Ser-155, 172-173 (TK), and 208-209 (ND). Residues 208–447 (NDTVGTMMTC…SDVRFLLSES (240 aa)) are hexokinase large subdomain 1. 2 residues coordinate D-glucose 6-phosphate: Asp-209 and Thr-232. Residues Asn-235, Glu-260, and 291 to 294 (QLFE) each bind D-glucose. The residue at position 337 (Ser-337) is a Phosphoserine. Asn-345 serves as a coordination point for ATP. 413 to 415 (DGS) is a D-glucose 6-phosphate binding site. An ATP-binding site is contributed by 425–426 (RR). D-glucose 6-phosphate-binding positions include Ser-449 and 532–536 (DLGGT). A hexokinase small subdomain 2 region spans residues 521–655 (DGTENGDFLA…EFDLDVVAVV (135 aa)). 532–537 (DLGGTN) is a binding site for ATP. Residues 603 to 604 (SF), 620 to 621 (TK), and 656 to 657 (ND) contribute to the D-glucose site. Positions 656 to 895 (NDTVGTMMTC…CNVSFLLSED (240 aa)) are hexokinase large subdomain 2. Residues Asp-657 and Thr-680 each coordinate D-glucose 6-phosphate. Thr-680 provides a ligand contact to ATP. Residues 682 to 683 (SN), Glu-708, and Glu-742 contribute to the D-glucose site. ATP contacts are provided by residues 747-748 (GM), 784-788 (TKFLS), and 863-867 (TLYKL). D-glucose 6-phosphate contacts are provided by residues 861–863 (DGT) and Ser-897.

Belongs to the hexokinase family. In terms of assembly, monomer. Interacts with RABL2/RABL2A; binds preferentially to GTP-bound RABL2. Interacts with VDAC1. The HK1-VDAC1 complex interacts with ATF2. Interacts (via N-terminal spermatogenic cell-specific region) with PFKM (via C-terminus). Interacts with SMAD5.

The protein localises to the mitochondrion outer membrane. Its subcellular location is the cytoplasm. It localises to the cytosol. It carries out the reaction a D-hexose + ATP = a D-hexose 6-phosphate + ADP + H(+). The enzyme catalyses D-fructose + ATP = D-fructose 6-phosphate + ADP + H(+). The catalysed reaction is D-glucose + ATP = D-glucose 6-phosphate + ADP + H(+). It catalyses the reaction D-mannose + ATP = D-mannose 6-phosphate + ADP + H(+). It carries out the reaction D-glucosamine + ATP = D-glucosamine 6-phosphate + ADP + H(+). It functions in the pathway carbohydrate metabolism; hexose metabolism. The protein operates within carbohydrate degradation; glycolysis; D-glyceraldehyde 3-phosphate and glycerone phosphate from D-glucose: step 1/4. Its activity is regulated as follows. Hexokinase is an allosteric enzyme inhibited by its product D-glucose 6-phosphate. Hexokinase activity is inhibited by N-acetyl-D-glucosamine. In terms of biological role, catalyzes the phosphorylation of various hexoses, such as D-glucose, D-glucosamine, D-fructose, D-mannose and 2-deoxy-D-glucose, to hexose 6-phosphate (D-glucose 6-phosphate, D-glucosamine 6-phosphate, D-fructose 6-phosphate, D-mannose 6-phosphate and 2-deoxy-D-glucose 6-phosphate, respectively). Does not phosphorylate N-acetyl-D-glucosamine. Mediates the initial step of glycolysis by catalyzing phosphorylation of D-glucose to D-glucose 6-phosphate. Involved in innate immunity and inflammation by acting as a pattern recognition receptor for bacterial peptidoglycan. When released in the cytosol, N-acetyl-D-glucosamine component of bacterial peptidoglycan inhibits the hexokinase activity of HK1 and causes its dissociation from mitochondrial outer membrane, thereby activating the NLRP3 inflammasome. The protein is Hexokinase-1 of Pongo abelii (Sumatran orangutan).